Here is a 483-residue protein sequence, read N- to C-terminus: Centrosomal protein cep57l1 (483 aa).

Residues 94–228 are a coiled coil; sequence EHKKVLESEK…AQVQTSLEVN (135 aa). Disordered stretches follow at residues 237 to 261, 303 to 325, and 416 to 460; these read AQNS…SKEP, PQVS…GGSR, and KEQP…SKAS. Over residues 243 to 252 the composition is skewed to basic residues; it reads RKVKKKKQSK. Positions 375–418 form a coiled coil; that stretch reads EDLERELDYVVKQMEIKSDQIMKLKRHQLNVNKLKKTAKLLKEQ. Over residues 420 to 435 the composition is skewed to polar residues; the sequence is RPTSVTKLAADKQNTG.

Belongs to the translokin family. As to quaternary structure, interacts with clip1, mis12, ndc80 and zwint. Interacts with gamma-tubulin.

Its subcellular location is the cytoplasm. The protein resides in the cytoskeleton. The protein localises to the microtubule organizing center. It localises to the centrosome. It is found in the chromosome. Its subcellular location is the centromere. The protein resides in the kinetochore. The protein localises to the spindle. Functionally, required for spindle microtubule attachment to both kinetochores and centrosomes. Also functions to tether minus-ends of spindle microtubules to centrosomes. May act by forming ring-like structures around microtubules, or by serving as a cross-linker or scaffold at the attachment site. This chain is Centrosomal protein cep57l1 (cep57l1), found in Xenopus tropicalis (Western clawed frog).